Reading from the N-terminus, the 305-residue chain is Acetyl-coenzyme A carboxylase carboxyl transferase subunit beta (305 aa).

Residues 25–293 (LWVQCPACQQ…LPKVESVASL (269 aa)) enclose the CoA carboxyltransferase N-terminal domain. Positions 29, 32, 48, and 51 each coordinate Zn(2+). The segment at 29–51 (CPACQQMIFARDLEKNQRVCTHC) adopts a C4-type zinc-finger fold.

It belongs to the AccD/PCCB family. In terms of assembly, acetyl-CoA carboxylase is a heterohexamer composed of biotin carboxyl carrier protein (AccB), biotin carboxylase (AccC) and two subunits each of ACCase subunit alpha (AccA) and ACCase subunit beta (AccD). Zn(2+) serves as cofactor.

Its subcellular location is the cytoplasm. The catalysed reaction is N(6)-carboxybiotinyl-L-lysyl-[protein] + acetyl-CoA = N(6)-biotinyl-L-lysyl-[protein] + malonyl-CoA. Its pathway is lipid metabolism; malonyl-CoA biosynthesis; malonyl-CoA from acetyl-CoA: step 1/1. Its function is as follows. Component of the acetyl coenzyme A carboxylase (ACC) complex. Biotin carboxylase (BC) catalyzes the carboxylation of biotin on its carrier protein (BCCP) and then the CO(2) group is transferred by the transcarboxylase to acetyl-CoA to form malonyl-CoA. In Granulibacter bethesdensis (strain ATCC BAA-1260 / CGDNIH1), this protein is Acetyl-coenzyme A carboxylase carboxyl transferase subunit beta.